We begin with the raw amino-acid sequence, 216 residues long: GTPase IMAP family member GIMD1 (216 aa).

One can recognise an AIG1-type G domain in the interval 5–216 (KMTINLALFG…ENCYQVLTFK (212 aa)). GTP is bound by residues 14-22 (GMTQSGKSS), Ser35, and 147-149 (HAE).

It belongs to the TRAFAC class TrmE-Era-EngA-EngB-Septin-like GTPase superfamily. AIG1/Toc34/Toc159-like paraseptin GTPase family. IAN subfamily.

In Bos taurus (Bovine), this protein is GTPase IMAP family member GIMD1 (GIMD1).